Here is a 373-residue protein sequence, read N- to C-terminus: Muconate cycloisomerase 1 (373 aa).

The active site involves lysine 169. Lysine 169 acts as the Proton acceptor in catalysis. Positions 198, 224, and 249 each coordinate Mn(2+). Glutamate 327 functions as the Proton donor in the catalytic mechanism.

This sequence belongs to the mandelate racemase/muconate lactonizing enzyme family. Requires Mn(2+) as cofactor.

The enzyme catalyses (S)-muconolactone = cis,cis-muconate + H(+). This chain is Muconate cycloisomerase 1 (catB), found in Rhodococcus opacus (Nocardia opaca).